The chain runs to 626 residues: Glycosyltransferase 25 family member (626 aa).

Residues M1 to G21 form the signal peptide. N-linked (GlcNAc...) asparagine glycosylation is found at N113, N234, N272, and N533. The short motif at H623–L626 is the Prevents secretion from ER element.

Belongs to the glycosyltransferase 25 family.

It localises to the endoplasmic reticulum lumen. This Drosophila pseudoobscura pseudoobscura (Fruit fly) protein is Glycosyltransferase 25 family member.